We begin with the raw amino-acid sequence, 241 residues long: Carboxy-S-adenosyl-L-methionine synthase (241 aa).

S-adenosyl-L-methionine is bound by residues tyrosine 38, 63–65, 88–89, 116–117, asparagine 131, and arginine 198; these read GCS, DN, and DI.

Belongs to the class I-like SAM-binding methyltransferase superfamily. Cx-SAM synthase family. In terms of assembly, homodimer.

The enzyme catalyses prephenate + S-adenosyl-L-methionine = carboxy-S-adenosyl-L-methionine + 3-phenylpyruvate + H2O. Its function is as follows. Catalyzes the conversion of S-adenosyl-L-methionine (SAM) to carboxy-S-adenosyl-L-methionine (Cx-SAM). This chain is Carboxy-S-adenosyl-L-methionine synthase, found in Pseudoalteromonas translucida (strain TAC 125).